We begin with the raw amino-acid sequence, 102 residues long: MSQFDHQHLSDTEEKQELKPPSMYKVIINNDDYTPMDFVIEVLMRFFKMDQERATDTMLQVHYKGKAVCGVYSAEIAETKVVQVNQYARENQHPLLCTMEQE.

Residues 1–18 (MSQFDHQHLSDTEEKQEL) are compositionally biased toward basic and acidic residues. The interval 1–21 (MSQFDHQHLSDTEEKQELKPP) is disordered.

It belongs to the ClpS family. Binds to the N-terminal domain of the chaperone ClpA.

Functionally, involved in the modulation of the specificity of the ClpAP-mediated ATP-dependent protein degradation. The protein is ATP-dependent Clp protease adapter protein ClpS of Idiomarina loihiensis (strain ATCC BAA-735 / DSM 15497 / L2-TR).